Here is a 481-residue protein sequence, read N- to C-terminus: Cardiolipin synthase A (481 aa).

2 consecutive transmembrane segments (helical) span residues 10-30 (FFGYLLGLIHLLGIVAALHAL) and 40-60 (IAWAMPLLFIPYLTLIPYLIF). 2 PLD phosphodiesterase domains span residues 220–247 (VNFRNHRKIVVVDGLLGFIGGHNVGDEY) and 394–421 (QPGFLHQKVVLVDDDVSAIGSANLDNRS). Active-site residues include His225, Lys227, Asp232, His399, Lys401, and Asp406.

This sequence belongs to the phospholipase D family. Cardiolipin synthase subfamily. ClsA sub-subfamily.

The protein resides in the cell inner membrane. The catalysed reaction is 2 a 1,2-diacyl-sn-glycero-3-phospho-(1'-sn-glycerol) = a cardiolipin + glycerol. In terms of biological role, catalyzes the reversible phosphatidyl group transfer from one phosphatidylglycerol molecule to another to form cardiolipin (CL) (diphosphatidylglycerol) and glycerol. This is Cardiolipin synthase A from Pseudomonas putida (strain ATCC 47054 / DSM 6125 / CFBP 8728 / NCIMB 11950 / KT2440).